Consider the following 376-residue polypeptide: c-di-GMP synthase (376 aa).

Belongs to the CD-NTase family. G05 subfamily.

The enzyme catalyses 2 GTP = 3',3'-c-di-GMP + 2 diphosphate. In terms of biological role, cyclic nucleotide synthase (second messenger synthase) of a CBASS antivirus system. CBASS (cyclic oligonucleotide-based antiphage signaling system) provides immunity against bacteriophage. The CD-NTase protein synthesizes cyclic nucleotides in response to infection; these serve as specific second messenger signals. The signals activate a diverse range of effectors, leading to bacterial cell death and thus abortive phage infection. A type I-D CBASS(GG) system. Functionally, cyclic dinucleotide synthase that catalyzes the synthesis of c-di-GMP, has no activity with other NTP substrates. The chain is c-di-GMP synthase from Roseivirga ehrenbergii (strain DSM 102268 / JCM 13514 / KCTC 12282 / NCIMB 14502 / KMM 6017).